Here is a 157-residue protein sequence, read N- to C-terminus: Histone H2B.3 (157 aa).

The segment at 1 to 64 (MAPKKEEKPA…DKKSKKKAKV (64 aa)) is disordered. Positions 26–42 (KAVKAPKKKEKKAPAKK) are enriched in basic residues. Lysine 153 is covalently cross-linked (Glycyl lysine isopeptide (Lys-Gly) (interchain with G-Cter in ubiquitin)).

It belongs to the histone H2B family. The nucleosome is a histone octamer containing two molecules each of H2A, H2B, H3 and H4 assembled in one H3-H4 heterotetramer and two H2A-H2B heterodimers. The octamer wraps approximately 147 bp of DNA. In terms of processing, monoubiquitinated to form H2BK143ub1; may give a specific tag for epigenetic transcriptional activation.

It is found in the nucleus. The protein localises to the chromosome. Core component of nucleosome. Nucleosomes wrap and compact DNA into chromatin, limiting DNA accessibility to the cellular machineries which require DNA as a template. Histones thereby play a central role in transcription regulation, DNA repair, DNA replication and chromosomal stability. DNA accessibility is regulated via a complex set of post-translational modifications of histones, also called histone code, and nucleosome remodeling. The protein is Histone H2B.3 of Volvox carteri (Green alga).